A 329-amino-acid chain; its full sequence is Caveolae-associated protein 4a (329 aa).

Disordered stretches follow at residues 198-260 (SKEN…NIAK) and 274-329 (KERT…IHED). Residues 198–262 (SKENMNKTRE…RLKENIAKKA (65 aa)) adopt a coiled-coil conformation. Residues 201 to 220 (NMNKTREKTRENLSKTKESL) show a composition bias toward basic and acidic residues. The span at 221–232 (SKTGQTLGTKFN) shows a compositional bias: polar residues. The span at 242–260 (EQREKIKQSSERLKENIAK) shows a compositional bias: basic and acidic residues. Positions 279 to 290 (AEGQEGAEAEPA) are enriched in low complexity. Thr-292 is subject to Phosphothreonine. Positions 310–329 (TENKREGPVSEEGATRIHED) are enriched in basic and acidic residues.

This sequence belongs to the CAVIN family.

The protein localises to the cytoplasm. It localises to the myofibril. The protein resides in the sarcomere. Its subcellular location is the membrane. It is found in the caveola. Induces rhoa activation and activates nppa transcription and myofibrillar organization through the rho/rock signaling pathway. The sequence is that of Caveolae-associated protein 4a (cavin4a) from Danio rerio (Zebrafish).